The following is a 297-amino-acid chain: NAD(P)-dependent methylenetetrahydromethanopterin dehydrogenase (297 aa).

The protein to M.extorquens MtdA. Homohexamer.

It localises to the cytoplasm. The catalysed reaction is 5,10-methylenetetrahydromethanopterin + NAD(+) = 5,10-methenyl-5,6,7,8-tetrahydromethanopterin + NADH. It catalyses the reaction 5,10-methylenetetrahydromethanopterin + NADP(+) = 5,10-methenyl-5,6,7,8-tetrahydromethanopterin + NADPH. The protein operates within one-carbon metabolism; formaldehyde degradation; formate from formaldehyde (H(4)MPT route): step 2/5. In terms of biological role, catalyzes the dehydrogenation of methylene-H(4)MPT. The protein is NAD(P)-dependent methylenetetrahydromethanopterin dehydrogenase (mtdB) of Methylorubrum extorquens (strain ATCC 14718 / DSM 1338 / JCM 2805 / NCIMB 9133 / AM1) (Methylobacterium extorquens).